A 326-amino-acid polypeptide reads, in one-letter code: Beta-ketoacyl-[acyl-carrier-protein] synthase III (326 aa).

Active-site residues include Cys112 and His251. Residues 252–256 (QANSR) form an ACP-binding region. Asn281 is an active-site residue.

This sequence belongs to the thiolase-like superfamily. FabH family. As to quaternary structure, homodimer.

The protein resides in the cytoplasm. It catalyses the reaction malonyl-[ACP] + acetyl-CoA + H(+) = 3-oxobutanoyl-[ACP] + CO2 + CoA. The protein operates within lipid metabolism; fatty acid biosynthesis. In terms of biological role, catalyzes the condensation reaction of fatty acid synthesis by the addition to an acyl acceptor of two carbons from malonyl-ACP. Catalyzes the first condensation reaction which initiates fatty acid synthesis and may therefore play a role in governing the total rate of fatty acid production. Possesses both acetoacetyl-ACP synthase and acetyl transacylase activities. Its substrate specificity determines the biosynthesis of branched-chain and/or straight-chain of fatty acids. The sequence is that of Beta-ketoacyl-[acyl-carrier-protein] synthase III from Clostridium botulinum (strain Langeland / NCTC 10281 / Type F).